Here is a 212-residue protein sequence, read N- to C-terminus: Probable NADH dehydrogenase [ubiquinone] iron-sulfur protein 8, mitochondrial (212 aa).

4Fe-4S ferredoxin-type domains are found at residues 104–133 and 143–172; these read RRYPSGEERCIACKLCEAICPAQAITIEAE and TRYDIDMTKCIYCGLCQEACPVDAIVEGPN. 8 residues coordinate [4Fe-4S] cluster: C113, C116, C119, C123, C152, C155, C158, and C162.

Belongs to the complex I 23 kDa subunit family. Complex I is composed of 45 different subunits This is a component of the iron-sulfur (IP) fragment of the enzyme. [4Fe-4S] cluster serves as cofactor.

It localises to the mitochondrion. It catalyses the reaction a ubiquinone + NADH + 5 H(+)(in) = a ubiquinol + NAD(+) + 4 H(+)(out). In terms of biological role, core subunit of the mitochondrial membrane respiratory chain NADH dehydrogenase (Complex I) that is believed to belong to the minimal assembly required for catalysis. Complex I functions in the transfer of electrons from NADH to the respiratory chain. The immediate electron acceptor for the enzyme is believed to be ubiquinone. The polypeptide is Probable NADH dehydrogenase [ubiquinone] iron-sulfur protein 8, mitochondrial (Caenorhabditis elegans).